The primary structure comprises 1327 residues: Vascular endothelial growth factor receptor 1 (1327 aa).

The first 24 residues, 1–24, serve as a signal peptide directing secretion; it reads MPRQLLSGTVLLGAAFLLAGSTSG. Residues 25-749 lie on the Extracellular side of the membrane; sequence SKLKVPVLSV…GTVERSNLEL (725 aa). 7 consecutive Ig-like C2-type domains span residues 30 to 121, 120 to 222, 227 to 323, 331 to 417, 424 to 545, 552 to 644, and 651 to 737; these read PVLS…SIVY, VYVF…HRET, DIKL…TTVI, NLKR…LTVT, PQIY…RNVS, PSGF…KDVS, and PALL…AYVT. N48, N73, N82, N98, and N125 each carry an N-linked (GlcNAc...) asparagine glycan. C51 and C105 are joined by a disulfide. A disulfide bridge links C154 with C203. N-linked (GlcNAc...) asparagine glycosylation occurs at N247. A disulfide bridge connects residues C248 and C307. 11 N-linked (GlcNAc...) asparagine glycosylation sites follow: N319, N383, N398, N409, N413, N470, N512, N543, N593, N615, and N663. C450 and C531 are joined by a disulfide. C573 and C626 are joined by a disulfide. The cysteines at positions 672 and 721 are disulfide-linked. Residues 750–770 traverse the membrane as a helical segment; that stretch reads ITLTCTCVAATLFWLLLTLFI. Residues 771-1327 are Cytoplasmic-facing; that stretch reads RKLKRPYFSE…SVVHYSQPSI (557 aa). The Protein kinase domain occupies 819–1151; that stretch reads LKLGKSLGHG…ELVKRLGDLL (333 aa). Residues 825-833 and K853 each bind ATP; that span reads LGHGAFGKV. The interval 950-971 is disordered; it reads ASVTSSESFASSGFQEDKSLSD. Low complexity predominate over residues 951-961; that stretch reads SVTSSESFASS. Catalysis depends on D1015, which acts as the Proton acceptor. Residues Y1046, Y1162, Y1202, Y1231, Y1316, and Y1322 each carry the phosphotyrosine; by autocatalysis modification.

Belongs to the protein kinase superfamily. Tyr protein kinase family. CSF-1/PDGF receptor subfamily. As to quaternary structure, interacts with VEGFA, VEGFB and PGF. Monomer in the absence of bound VEGFA, VEGFB or PGF. Homodimer in the presence of bound VEGFA, VEGFB and PGF. In terms of processing, autophosphorylated on tyrosine residues upon ligand binding.

It localises to the cell membrane. It is found in the endosome. The protein resides in the secreted. It carries out the reaction L-tyrosyl-[protein] + ATP = O-phospho-L-tyrosyl-[protein] + ADP + H(+). Its activity is regulated as follows. Present in an inactive conformation in the absence of bound ligand. Binding of VEGFA, VEGFB or PGF leads to dimerization and activation by autophosphorylation on tyrosine residues. Tyrosine-protein kinase that acts as a cell-surface receptor for VEGFA, VEGFB and PGF, and plays an essential role in the regulation of angiogenesis, cell survival, cell migration, macrophage function, and chemotaxis. Acts as a positive regulator of postnatal retinal hyaloid vessel regression. Has very high affinity for VEGFA and relatively low protein kinase activity; may function as a negative regulator of VEGFA signaling by limiting the amount of free VEGFA and preventing its binding to KDR. Ligand binding leads to the activation of several signaling cascades. Activation of PLCG1 leads to the production of the cellular signaling molecules diacylglycerol and inositol 1,4,5-trisphosphate and the activation of protein kinase C. Mediates phosphorylation of PIK3R1, the regulatory subunit of phosphatidylinositol 3-kinase, leading to activation of phosphatidylinositol kinase and the downstream signaling pathway. Mediates activation of MAPK1/ERK2, MAPK3/ERK1 and the MAP kinase signaling pathway, as well as of the AKT1 signaling pathway. Phosphorylates PLCG1. Promotes phosphorylation of AKT1 and CBL. This Gallus gallus (Chicken) protein is Vascular endothelial growth factor receptor 1 (FLT1).